A 396-amino-acid polypeptide reads, in one-letter code: Ribosomal RNA large subunit methyltransferase I (396 aa).

Positions 2 to 79 (AVRIKLKPGR…REEEIDREFF (78 aa)) constitute a PUA domain.

It belongs to the methyltransferase superfamily. RlmI family.

Its subcellular location is the cytoplasm. The enzyme catalyses cytidine(1962) in 23S rRNA + S-adenosyl-L-methionine = 5-methylcytidine(1962) in 23S rRNA + S-adenosyl-L-homocysteine + H(+). Functionally, specifically methylates the cytosine at position 1962 (m5C1962) of 23S rRNA. The sequence is that of Ribosomal RNA large subunit methyltransferase I from Shewanella sp. (strain MR-4).